The sequence spans 425 residues: Adenylosuccinate synthetase (425 aa).

GTP-binding positions include 12–18 (GDEGKGK) and 40–42 (GHT). Asp-13 acts as the Proton acceptor in catalysis. Mg(2+) contacts are provided by Asp-13 and Gly-40. IMP is bound by residues 13–16 (DEGK), 38–41 (NAGH), Thr-130, Arg-144, Gln-225, Thr-240, and Arg-304. Residue His-41 is the Proton donor of the active site. A substrate-binding site is contributed by 300-306 (ATTGRPR). GTP is bound by residues Arg-306, 332-334 (KLD), and 414-416 (SVG).

Belongs to the adenylosuccinate synthetase family. In terms of assembly, homodimer. The cofactor is Mg(2+).

It is found in the cytoplasm. It catalyses the reaction IMP + L-aspartate + GTP = N(6)-(1,2-dicarboxyethyl)-AMP + GDP + phosphate + 2 H(+). It functions in the pathway purine metabolism; AMP biosynthesis via de novo pathway; AMP from IMP: step 1/2. In terms of biological role, plays an important role in the de novo pathway of purine nucleotide biosynthesis. Catalyzes the first committed step in the biosynthesis of AMP from IMP. The polypeptide is Adenylosuccinate synthetase (Desulfovibrio desulfuricans (strain ATCC 27774 / DSM 6949 / MB)).